Here is a 360-residue protein sequence, read N- to C-terminus: Peptide chain release factor 1 (360 aa).

An N5-methylglutamine modification is found at glutamine 235. The tract at residues 285 to 313 (KRQQAEASTRRNLLGSGDRSDRNRTYNFP) is disordered.

Belongs to the prokaryotic/mitochondrial release factor family. Methylated by PrmC. Methylation increases the termination efficiency of RF1.

The protein localises to the cytoplasm. In terms of biological role, peptide chain release factor 1 directs the termination of translation in response to the peptide chain termination codons UAG and UAA. The polypeptide is Peptide chain release factor 1 (Enterobacter sp. (strain 638)).